A 194-amino-acid chain; its full sequence is Adenylate kinase (194 aa).

12-17 (GSGKTT) provides a ligand contact to ATP. The tract at residues 34-63 (STGDLLREEVKKGTPLGATIASFIDNGQLV) is NMP. AMP is bound by residues threonine 35, arginine 40, 61–63 (QLV), 88–91 (GFPR), and glutamine 95. The segment at 130–136 (GRARGAD) is LID. Arginine 131 contributes to the ATP binding site. Residues arginine 133 and arginine 145 each contribute to the AMP site. An ATP-binding site is contributed by arginine 173.

It belongs to the adenylate kinase family. As to quaternary structure, monomer.

It localises to the cytoplasm. The catalysed reaction is AMP + ATP = 2 ADP. The protein operates within purine metabolism; AMP biosynthesis via salvage pathway; AMP from ADP: step 1/1. In terms of biological role, catalyzes the reversible transfer of the terminal phosphate group between ATP and AMP. Plays an important role in cellular energy homeostasis and in adenine nucleotide metabolism. This is Adenylate kinase from Nitratiruptor sp. (strain SB155-2).